The sequence spans 465 residues: 3-isopropylmalate dehydratase large subunit (465 aa).

3 residues coordinate [4Fe-4S] cluster: C346, C406, and C409.

The protein belongs to the aconitase/IPM isomerase family. LeuC type 1 subfamily. Heterodimer of LeuC and LeuD. [4Fe-4S] cluster is required as a cofactor.

It catalyses the reaction (2R,3S)-3-isopropylmalate = (2S)-2-isopropylmalate. It participates in amino-acid biosynthesis; L-leucine biosynthesis; L-leucine from 3-methyl-2-oxobutanoate: step 2/4. In terms of biological role, catalyzes the isomerization between 2-isopropylmalate and 3-isopropylmalate, via the formation of 2-isopropylmaleate. The sequence is that of 3-isopropylmalate dehydratase large subunit from Leptospira interrogans serogroup Icterohaemorrhagiae serovar copenhageni (strain Fiocruz L1-130).